Consider the following 649-residue polypeptide: Acetyl-coenzyme A synthetase (649 aa).

Residues 190-193 and T310 each bind CoA; that span reads RGGR. ATP contacts are provided by residues 386 to 388, 410 to 415, D499, and R514; these read GEP and DTWWQT. Residue S522 coordinates CoA. ATP is bound at residue R525. Mg(2+)-binding residues include V536, H538, and V541. R583 serves as a coordination point for CoA. Position 608 is an N6-acetyllysine (K608).

This sequence belongs to the ATP-dependent AMP-binding enzyme family. It depends on Mg(2+) as a cofactor. Post-translationally, acetylated. Deacetylation by the SIR2-homolog deacetylase activates the enzyme.

It catalyses the reaction acetate + ATP + CoA = acetyl-CoA + AMP + diphosphate. Catalyzes the conversion of acetate into acetyl-CoA (AcCoA), an essential intermediate at the junction of anabolic and catabolic pathways. AcsA undergoes a two-step reaction. In the first half reaction, AcsA combines acetate with ATP to form acetyl-adenylate (AcAMP) intermediate. In the second half reaction, it can then transfer the acetyl group from AcAMP to the sulfhydryl group of CoA, forming the product AcCoA. In Methylorubrum extorquens (strain PA1) (Methylobacterium extorquens), this protein is Acetyl-coenzyme A synthetase.